A 371-amino-acid chain; its full sequence is Proton-coupled zinc antiporter SLC30A2 (371 aa).

The Cytoplasmic portion of the chain corresponds to 1–69 (MQTMDKQNLL…DPEKQRARRK (69 aa)). The Mitochondrial localization signal motif lies at 47-50 (HYCH). Residue Cys-49 participates in Zn(2+) binding. The chain crosses the membrane as a helical span at residues 70-90 (LYVASAICLVFMIGEIIGGYL). The Lumenal portion of the chain corresponds to 91–99 (AQSLAIMTD). The chain crosses the membrane as a helical span at residues 100–120 (AAHLLTDFASMLISLFALWVS). Residues His-102 and Asp-106 each coordinate Zn(2+). At 121–136 (SRPATKTMNFGWHRAE) the chain is on the cytoplasmic side. The chain crosses the membrane as a helical span at residues 137 to 157 (ILGALLSVLSIWVVTGVLVYL). At 158 to 172 (AVQRLISGDYEIKGD) the chain is on the lumenal side. Residues 173–193 (TMLITSGCAVAVNLIMGLALH) traverse the membrane as a helical segment. The Cytoplasmic portion of the chain corresponds to 194 to 219 (QSGHGHSHGNSRDDSSQQQNPSVRAA). Residues 220–240 (FIHVIGDLLQSVGVLVAAYII) form a helical membrane-spanning segment. Zn(2+) is bound by residues His-222 and Asp-226. Over 241-248 (YFKPEYKY) the chain is Lumenal. The chain crosses the membrane as a helical span at residues 249 to 269 (VDPICTFLFSILVLGTTLTIL). The Cytoplasmic portion of the chain corresponds to 270-303 (RDVILVLMEGTPKGVDFTTVKNLLLSVDGVEALH). A Lysosomal targeting motif motif is present at residues 293–294 (LL). The residue at position 295 (Ser-295) is a Phosphoserine. Residues His-303, His-320, and Glu-354 each contribute to the Zn(2+) site. Residues 304 to 324 (SLHIWALTVAQPVLSVHIAIA) traverse the membrane as a helical segment. Over 325–371 (QNADAQAVLKVARDRLQGKFNFHTMTIQIEKYSEDMKNCQACQGPLE) the chain is Lumenal.

The protein belongs to the cation diffusion facilitator (CDF) transporter (TC 2.A.4) family. SLC30A subfamily. As to quaternary structure, homodimer. Interacts (via lysosomal targeting motif) with AP3D1; in AP-3-mediated transport to lysosomes. Interacts with TMEM163. Phosphorylated at Ser-295. Phosphorylation at Ser-295 prevents localization to lysosomes. Dephosphorylation of Ser-295 which triggers localization to lysosomes, accumulation of zinc into lysosomes and lysosomal-mediated cell death is induced by TNF-alpha.

Its subcellular location is the cytoplasmic vesicle. The protein localises to the secretory vesicle membrane. It localises to the zymogen granule membrane. The protein resides in the endosome membrane. It is found in the lysosome membrane. Its subcellular location is the mitochondrion inner membrane. The protein localises to the cell membrane. It carries out the reaction Zn(2+)(in) + 2 H(+)(out) = Zn(2+)(out) + 2 H(+)(in). Its function is as follows. Electroneutral proton-coupled antiporter concentrating zinc ions into a variety of intracellular organelles including endosomes, zymogen granules and mitochondria. Thereby, plays a crucial role in cellular zinc homeostasis to confer upon cells protection against its potential cytotoxicity. Regulates the zinc concentration of milk, through the transport of zinc ions into secretory vesicles of mammary cells. By concentrating zinc ions into lysosomes participates to lysosomal-mediated cell death during early mammary gland involution. Electroneutral proton-coupled antiporter mediating the efflux of zinc ions through the plasma membrane. This Mus musculus (Mouse) protein is Proton-coupled zinc antiporter SLC30A2.